We begin with the raw amino-acid sequence, 446 residues long: Phosphoglucosamine mutase (446 aa).

Serine 101 acts as the Phosphoserine intermediate in catalysis. The Mg(2+) site is built by serine 101, aspartate 240, aspartate 242, and aspartate 244. The residue at position 101 (serine 101) is a Phosphoserine.

The protein belongs to the phosphohexose mutase family. The cofactor is Mg(2+). Activated by phosphorylation.

It catalyses the reaction alpha-D-glucosamine 1-phosphate = D-glucosamine 6-phosphate. In terms of biological role, catalyzes the conversion of glucosamine-6-phosphate to glucosamine-1-phosphate. The polypeptide is Phosphoglucosamine mutase (Coxiella burnetii (strain CbuK_Q154) (Coxiella burnetii (strain Q154))).